We begin with the raw amino-acid sequence, 370 residues long: 1-propanol dehydrogenase PduQ (370 aa).

The protein belongs to the iron-containing alcohol dehydrogenase family. As to quaternary structure, interacts with PduP, probably via the N-terminus of PduQ. It depends on Fe cation as a cofactor.

The protein resides in the bacterial microcompartment. The enzyme catalyses 1-propanol + NAD(+) = propanal + NADH + H(+). It participates in polyol metabolism; 1,2-propanediol degradation. Enzyme is oxygen sensitive. Its function is as follows. An iron-dependent alcohol dehydrogenase required for optimal 1,2-propanediol (1,2-PD) degradation. NAD(+) and NADH are regenerated internally within the bacterial microcompartment (BMC) dedicated to 1,2-PD degradation by the PduP and PduQ enzymes, which reduce NAD(+) and oxidize NADH respectively, although there must also be cofactor transport across the BMC. In terms of biological role, the 1,2-PD-specific bacterial microcompartment (BMC) concentrates low levels of 1,2-PD catabolic enzymes, concentrates volatile reaction intermediates thus enhancing pathway flux and keeps the level of toxic, mutagenic propionaldehyde low. The sequence is that of 1-propanol dehydrogenase PduQ from Salmonella typhimurium (strain LT2 / SGSC1412 / ATCC 700720).